The following is a 441-amino-acid chain: uncharacterized protein (441 aa).

12 helical membrane passes run 21–41, 51–71, 94–114, 118–138, 150–170, 195–215, 239–259, 260–280, 291–311, 334–354, 363–383, and 419–439; these read VVVA…MSLG, LGGG…AVAI, AAST…VTMS, VIPV…GVFA, VLTF…GGIF, AMLL…FVSY, QHIL…LYTG, SMII…VIAW, VHMM…AAVM, LAAL…GSSF, IYVP…ALVG, and VVPT…IAAM.

Its subcellular location is the cell membrane. This is an uncharacterized protein from Vibrio parahaemolyticus serotype O3:K6 (strain RIMD 2210633).